We begin with the raw amino-acid sequence, 203 residues long: Small ribosomal subunit protein uS4 (203 aa).

The S4 RNA-binding domain occupies 93 to 153 (QRLDSVVYRL…EKSKNILPIQ (61 aa)).

The protein belongs to the universal ribosomal protein uS4 family. Part of the 30S ribosomal subunit. Contacts protein S5. The interaction surface between S4 and S5 is involved in control of translational fidelity.

Its function is as follows. One of the primary rRNA binding proteins, it binds directly to 16S rRNA where it nucleates assembly of the body of the 30S subunit. In terms of biological role, with S5 and S12 plays an important role in translational accuracy. The chain is Small ribosomal subunit protein uS4 from Leuconostoc mesenteroides subsp. mesenteroides (strain ATCC 8293 / DSM 20343 / BCRC 11652 / CCM 1803 / JCM 6124 / NCDO 523 / NBRC 100496 / NCIMB 8023 / NCTC 12954 / NRRL B-1118 / 37Y).